Reading from the N-terminus, the 360-residue chain is Phospho-N-acetylmuramoyl-pentapeptide-transferase (360 aa).

The next 10 membrane-spanning stretches (helical) occupy residues 27–47 (IVSLLTALAIALWMGPRMIAF), 71–91 (TPTMGGLLILLSITISTLLWV), 94–114 (NNPYVWCVLIVLIGYGIVGFV), 132–152 (WKYFWQSVLALGVAFAMYSFG), 168–188 (VMPQLGVLYILLTYFVIVGTS), 199–219 (GLAIMPTVFVAAGFALVAWAT), 236–256 (AGELVIVCTAIVGAGLGFLWF), 263–283 (VFMGDVGSLALGGALGTIAVL), 288–308 (FLLVIMGGVFVVETLSVILQV), and 338–358 (VIVRFWIISLMLVLIGLATLK).

It belongs to the glycosyltransferase 4 family. MraY subfamily. Mg(2+) serves as cofactor.

Its subcellular location is the cell inner membrane. It catalyses the reaction UDP-N-acetyl-alpha-D-muramoyl-L-alanyl-gamma-D-glutamyl-meso-2,6-diaminopimeloyl-D-alanyl-D-alanine + di-trans,octa-cis-undecaprenyl phosphate = di-trans,octa-cis-undecaprenyl diphospho-N-acetyl-alpha-D-muramoyl-L-alanyl-D-glutamyl-meso-2,6-diaminopimeloyl-D-alanyl-D-alanine + UMP. The protein operates within cell wall biogenesis; peptidoglycan biosynthesis. Its function is as follows. Catalyzes the initial step of the lipid cycle reactions in the biosynthesis of the cell wall peptidoglycan: transfers peptidoglycan precursor phospho-MurNAc-pentapeptide from UDP-MurNAc-pentapeptide onto the lipid carrier undecaprenyl phosphate, yielding undecaprenyl-pyrophosphoryl-MurNAc-pentapeptide, known as lipid I. In Photorhabdus laumondii subsp. laumondii (strain DSM 15139 / CIP 105565 / TT01) (Photorhabdus luminescens subsp. laumondii), this protein is Phospho-N-acetylmuramoyl-pentapeptide-transferase.